A 280-amino-acid chain; its full sequence is NAD(+) hydrolase TirS (280 aa).

Positions 22-94 form a coiled coil; it reads MNKLPDEIDR…KINLQKEQSR (73 aa). The TIR domain occupies 141–275; sequence IEYDVFLSHS…EIVEKIYQVI (135 aa). NAD(+) contacts are provided by residues 150–151 and Glu-180; that span reads SS. Glu-216 is an active-site residue.

Its subcellular location is the secreted. It carries out the reaction NAD(+) + H2O = ADP-D-ribose + nicotinamide + H(+). The enzyme catalyses NADP(+) + H2O = ADP-D-ribose 2'-phosphate + nicotinamide + H(+). In terms of biological role, virulence factor that suppresses host Toll-like receptor 2 (TLR2)-mediated NF-kappa-B signaling upon infection. NAD(+) hydrolase (NADase) that catalyzes cleavage of NAD(+) into ADP-D-ribose (ADPR) and nicotinamide. Also able to hydrolyze NADP(+), but not other NAD(+)-related molecules. Able to reduce NAD(+) levels in host cells. The protein is NAD(+) hydrolase TirS of Staphylococcus aureus (strain MSSA476).